Consider the following 726-residue polypeptide: MTTEGSCPFHHTAAIGGLKTNEEWWPNRLNLKILRQNSPLSNPMGAGFNYAKEFCSLDLSALKEDLRRLMTDSQQWWPADFGHYGPLFIRMAWHSAGTYRVHDGRGGAGSGQQRFAPLNSWPDNVLLDKARRLLWPIKQKYGRKISWADLIILAGNVALESMGLKTFGFGGGRVDSWEPDESVYWGVEQKWLEDKRYSGKRDLEQPLAAVQMGLIYVNPEGPNGNPDPVAAAVDIRETFTRMGMNDAETVALIAGGHTFGKAHGAGPASFVGPEPEAAGIAEQGLGWRSSYRSGKGADAIGSGLEVIWTRTPTRWNNDYFQFLFEYEWEPTKSPAGAWQWVAKDAPEIVPDPFDPAKKRKPTMLTTDLSLRFDPVYEKIARAYYEQPDLFADAFARAWFKLTHRDMGPRSRYLGPEVPKEDLLWQDPIPPVDHPLIETDDMNSLKAKILESGLTVRELVFTAWSSASTFRGSDKRGGANGARIRLSPQKDWPANEPTQLARVLAVLEQIQKEFNARSPKKVSMADLIVLGGCAGVEQAARNGGRSVVVPFIPGRSDALEEQTDVESFAFLEPWADGFRNFYKKGCSVPQEALLVDKAQLLTLTAPEMTVLVGGMRVLDANVGRSRHGVFTDRPGALTNDFFVNLLDMDTEWKPVDEREELFEGRDRKTGTLLWTATRVDLIFGSNSELRAISEVYGAADAQDKFVKDFISAWNKVMNLDRFDLAPA.

Residues 93-216 constitute a cross-link (tryptophyl-tyrosyl-methioninium (Trp-Tyr) (with M-242)); sequence WHSAGTYRVH…LAAVQMGLIY (124 aa). The active-site Proton acceptor is His94. The segment at residues 216–242 is a cross-link (tryptophyl-tyrosyl-methioninium (Tyr-Met) (with W-93)); the sequence is YVNPEGPNGNPDPVAAAVDIRETFTRM. His257 contributes to the heme b binding site. The segment at 471–490 is disordered; that stretch reads GSDKRGGANGARIRLSPQKD.

It belongs to the peroxidase family. Peroxidase/catalase subfamily. Homodimer or homotetramer. It depends on heme b as a cofactor. In terms of processing, formation of the three residue Trp-Tyr-Met cross-link is important for the catalase, but not the peroxidase activity of the enzyme.

It carries out the reaction H2O2 + AH2 = A + 2 H2O. The enzyme catalyses 2 H2O2 = O2 + 2 H2O. Bifunctional enzyme with both catalase and broad-spectrum peroxidase activity. In Methylacidiphilum infernorum (isolate V4) (Methylokorus infernorum (strain V4)), this protein is Catalase-peroxidase.